The following is a 254-amino-acid chain: 3-deoxy-manno-octulosonate cytidylyltransferase (254 aa).

The protein belongs to the KdsB family.

It is found in the cytoplasm. The enzyme catalyses 3-deoxy-alpha-D-manno-oct-2-ulosonate + CTP = CMP-3-deoxy-beta-D-manno-octulosonate + diphosphate. Its pathway is nucleotide-sugar biosynthesis; CMP-3-deoxy-D-manno-octulosonate biosynthesis; CMP-3-deoxy-D-manno-octulosonate from 3-deoxy-D-manno-octulosonate and CTP: step 1/1. The protein operates within bacterial outer membrane biogenesis; lipopolysaccharide biosynthesis. Functionally, activates KDO (a required 8-carbon sugar) for incorporation into bacterial lipopolysaccharide in Gram-negative bacteria. This Ectopseudomonas mendocina (strain ymp) (Pseudomonas mendocina) protein is 3-deoxy-manno-octulosonate cytidylyltransferase.